Reading from the N-terminus, the 165-residue chain is NADPH-dependent 7-cyano-7-deazaguanine reductase (165 aa).

The active-site Thioimide intermediate is the C56. D63 acts as the Proton donor in catalysis. Substrate is bound by residues 78–80 (VES) and 97–98 (HE).

The protein belongs to the GTP cyclohydrolase I family. QueF type 1 subfamily.

Its subcellular location is the cytoplasm. The enzyme catalyses 7-aminomethyl-7-carbaguanine + 2 NADP(+) = 7-cyano-7-deazaguanine + 2 NADPH + 3 H(+). Its pathway is tRNA modification; tRNA-queuosine biosynthesis. In terms of biological role, catalyzes the NADPH-dependent reduction of 7-cyano-7-deazaguanine (preQ0) to 7-aminomethyl-7-deazaguanine (preQ1). This chain is NADPH-dependent 7-cyano-7-deazaguanine reductase, found in Oceanobacillus iheyensis (strain DSM 14371 / CIP 107618 / JCM 11309 / KCTC 3954 / HTE831).